The chain runs to 359 residues: 3-dehydroquinate synthase (359 aa).

NAD(+) contacts are provided by residues 71 to 76 (DGEQFK), 105 to 109 (GVIGD), 129 to 130 (TT), Lys142, Lys151, and 169 to 172 (CLQT). 3 residues coordinate Zn(2+): Glu184, His247, and His264.

It belongs to the sugar phosphate cyclases superfamily. Dehydroquinate synthase family. The cofactor is Co(2+). Zn(2+) serves as cofactor. NAD(+) is required as a cofactor.

The protein localises to the cytoplasm. It carries out the reaction 7-phospho-2-dehydro-3-deoxy-D-arabino-heptonate = 3-dehydroquinate + phosphate. Its pathway is metabolic intermediate biosynthesis; chorismate biosynthesis; chorismate from D-erythrose 4-phosphate and phosphoenolpyruvate: step 2/7. In terms of biological role, catalyzes the conversion of 3-deoxy-D-arabino-heptulosonate 7-phosphate (DAHP) to dehydroquinate (DHQ). This chain is 3-dehydroquinate synthase, found in Shewanella sp. (strain ANA-3).